A 376-amino-acid polypeptide reads, in one-letter code: Probable allantoicase (376 aa).

It belongs to the allantoicase family.

It catalyses the reaction allantoate + H2O = (S)-ureidoglycolate + urea. It participates in nitrogen metabolism; (S)-allantoin degradation; (S)-ureidoglycolate from allantoate (aminidohydrolase route): step 1/1. In Streptomyces coelicolor (strain ATCC BAA-471 / A3(2) / M145), this protein is Probable allantoicase.